A 153-amino-acid polypeptide reads, in one-letter code: Deoxyuridine 5'-triphosphate nucleotidohydrolase (153 aa).

Substrate is bound by residues 71-73 (RSG), Asn-84, 88-90 (LID), and Met-98.

This sequence belongs to the dUTPase family. Mg(2+) serves as cofactor.

The catalysed reaction is dUTP + H2O = dUMP + diphosphate + H(+). It participates in pyrimidine metabolism; dUMP biosynthesis; dUMP from dCTP (dUTP route): step 2/2. This enzyme is involved in nucleotide metabolism: it produces dUMP, the immediate precursor of thymidine nucleotides and it decreases the intracellular concentration of dUTP so that uracil cannot be incorporated into DNA. This is Deoxyuridine 5'-triphosphate nucleotidohydrolase from Hydrogenovibrio crunogenus (strain DSM 25203 / XCL-2) (Thiomicrospira crunogena).